The chain runs to 151 residues: Urease accessory protein UreE (151 aa).

It belongs to the UreE family.

It is found in the cytoplasm. Its function is as follows. Involved in urease metallocenter assembly. Binds nickel. Probably functions as a nickel donor during metallocenter assembly. In Bacillus cereus (strain ATCC 10987 / NRS 248), this protein is Urease accessory protein UreE.